A 309-amino-acid chain; its full sequence is Acetyl-coenzyme A carboxylase carboxyl transferase subunit beta (309 aa).

The CoA carboxyltransferase N-terminal domain maps to 27–296 (LWKKCPKCGA…PGTEAPIEFE (270 aa)). The Zn(2+) site is built by C31, C34, C50, and C53. The C4-type zinc-finger motif lies at 31-53 (CPKCGAFLYKPELEKNLDVCPKC). A disordered region spans residues 288–309 (GTEAPIEFEVTEKPDVDEPEGQ).

This sequence belongs to the AccD/PCCB family. In terms of assembly, acetyl-CoA carboxylase is a heterohexamer composed of biotin carboxyl carrier protein (AccB), biotin carboxylase (AccC) and two subunits each of ACCase subunit alpha (AccA) and ACCase subunit beta (AccD). It depends on Zn(2+) as a cofactor.

It is found in the cytoplasm. The catalysed reaction is N(6)-carboxybiotinyl-L-lysyl-[protein] + acetyl-CoA = N(6)-biotinyl-L-lysyl-[protein] + malonyl-CoA. Its pathway is lipid metabolism; malonyl-CoA biosynthesis; malonyl-CoA from acetyl-CoA: step 1/1. In terms of biological role, component of the acetyl coenzyme A carboxylase (ACC) complex. Biotin carboxylase (BC) catalyzes the carboxylation of biotin on its carrier protein (BCCP) and then the CO(2) group is transferred by the transcarboxylase to acetyl-CoA to form malonyl-CoA. In Marinobacter nauticus (strain ATCC 700491 / DSM 11845 / VT8) (Marinobacter aquaeolei), this protein is Acetyl-coenzyme A carboxylase carboxyl transferase subunit beta.